The primary structure comprises 406 residues: Tryptophan synthase beta chain (406 aa).

Residue Lys99 is modified to N6-(pyridoxal phosphate)lysine.

This sequence belongs to the TrpB family. In terms of assembly, tetramer of two alpha and two beta chains. It depends on pyridoxal 5'-phosphate as a cofactor.

The enzyme catalyses (1S,2R)-1-C-(indol-3-yl)glycerol 3-phosphate + L-serine = D-glyceraldehyde 3-phosphate + L-tryptophan + H2O. Its pathway is amino-acid biosynthesis; L-tryptophan biosynthesis; L-tryptophan from chorismate: step 5/5. In terms of biological role, the beta subunit is responsible for the synthesis of L-tryptophan from indole and L-serine. This is Tryptophan synthase beta chain from Brucella anthropi (strain ATCC 49188 / DSM 6882 / CCUG 24695 / JCM 21032 / LMG 3331 / NBRC 15819 / NCTC 12168 / Alc 37) (Ochrobactrum anthropi).